The sequence spans 401 residues: NADH-quinone oxidoreductase subunit D 2 (401 aa).

Belongs to the complex I 49 kDa subunit family. NDH-1 is composed of 14 different subunits. Subunits NuoB, C, D, E, F, and G constitute the peripheral sector of the complex.

The protein localises to the cell inner membrane. It carries out the reaction a quinone + NADH + 5 H(+)(in) = a quinol + NAD(+) + 4 H(+)(out). Functionally, NDH-1 shuttles electrons from NADH, via FMN and iron-sulfur (Fe-S) centers, to quinones in the respiratory chain. The immediate electron acceptor for the enzyme in this species is believed to be ubiquinone. Couples the redox reaction to proton translocation (for every two electrons transferred, four hydrogen ions are translocated across the cytoplasmic membrane), and thus conserves the redox energy in a proton gradient. In Thermodesulfovibrio yellowstonii (strain ATCC 51303 / DSM 11347 / YP87), this protein is NADH-quinone oxidoreductase subunit D 2.